A 306-amino-acid chain; its full sequence is Transcription factor MYBS1 (306 aa).

Residues 18-73 (WTREDDKAFENALAACAAPPPADGGAPDDDWFAALAASVPGARSAEEVRRHYEALV) form the Myb-like domain. A Nuclear export signal 1 motif is present at residues 72–86 (LVEDVAAIDAGRVPL). Residues 89-142 (YAGEESAAPPDGAGAAAAASKDGGHRRDERKGGGGGYDGGKSCSKAEQERRKGI) form a disordered region. The segment covering 92–109 (EESAAPPDGAGAAAAASK) has biased composition (low complexity). Basic and acidic residues-rich tracts occupy residues 110 to 120 (DGGHRRDERKG) and 132 to 142 (SKAEQERRKGI). Positions 133–140 (KAEQERRK) match the Nuclear localization signal 1 motif. The HTH myb-type domain maps to 136–192 (QERRKGIPWTEEEHRLFLLGLDKFGKGDWRSISRNFVISRTPTQVASHAQKYFIRLN). The H-T-H motif DNA-binding region spans 164–188 (WRSISRNFVISRTPTQVASHAQKYF). A Nuclear localization signal 2 motif is present at residues 196–200 (RDRRR). The Nuclear export signal 2 signature appears at 203–215 (IHDITSVTAGDQV). The span at 228-241 (ATGNPAAAALGPPG) shows a compositional bias: low complexity. A disordered region spans residues 228-255 (ATGNPAAAALGPPGMKHHHHHHPGGAPP).

As to quaternary structure, homodimer. Interacts with GAMYB. In terms of tissue distribution, expressed in aboveground tissues, with the highest level in leaves.

The protein resides in the nucleus. The protein localises to the cytoplasm. In terms of biological role, transcription activator that binds to 5'-TATCCA-3' elements in gene promoters. Derepresses strongly the sugar-repressed transcription of promoters containing SRS or 5'-TATCCA-3' elements. Functions with GAMYB to integrate diverse nutrient starvation and gibberellin (GA) signaling pathways during germination of grains. Sugar, nitrogen and phosphate starvation signals converge and interconnect with GA to promote the co-nuclear import of MYBS1 and GAMYB, resulting in the expression of a large set of GA-inducible hydrolases, transporters, and regulators that are essential for mobilization of nutrient reserves in the endosperm to support seedling growth. The protein is Transcription factor MYBS1 of Oryza sativa subsp. japonica (Rice).